A 533-amino-acid chain; its full sequence is Ribonuclease Y (533 aa).

The interval 16–41 (VERIRRRAEQDAAEQTERVRREAEQI) is disordered. Positions 22–41 (RAEQDAAEQTERVRREAEQI) are enriched in basic and acidic residues. Positions 223–289 (VVSVLHLPSD…RITLTALVSD (67 aa)) constitute a KH domain. Residues 349-442 (VLAHLVESAH…TQAADQISGG (94 aa)) enclose the HD domain.

This sequence belongs to the RNase Y family.

Its function is as follows. Endoribonuclease that initiates mRNA decay. In Parafrankia sp. (strain EAN1pec), this protein is Ribonuclease Y.